The primary structure comprises 413 residues: uncharacterized protein (413 aa).

Transmembrane regions (helical) follow at residues 22–42, 270–290, 312–332, and 379–399; these read VLLV…TLIL, IIYV…ISIC, ILIQ…GNLI, and LIII…YPIY.

Belongs to the ABC-4 integral membrane protein family. LolC/E subfamily.

It localises to the cell membrane. This is an uncharacterized protein from Buchnera aphidicola subsp. Schizaphis graminum (strain Sg).